The sequence spans 471 residues: Glutamate--tRNA ligase (471 aa).

Positions 9–19 match the 'HIGH' region motif; the sequence is PSPTGYLHVGG. Zn(2+) contacts are provided by cysteine 98, cysteine 100, cysteine 125, and aspartate 127. The 'KMSKS' region signature appears at 237 to 241; the sequence is KLSKR. Residue lysine 240 participates in ATP binding.

The protein belongs to the class-I aminoacyl-tRNA synthetase family. Glutamate--tRNA ligase type 1 subfamily. Monomer. Zn(2+) is required as a cofactor.

The protein localises to the cytoplasm. The catalysed reaction is tRNA(Glu) + L-glutamate + ATP = L-glutamyl-tRNA(Glu) + AMP + diphosphate. Catalyzes the attachment of glutamate to tRNA(Glu) in a two-step reaction: glutamate is first activated by ATP to form Glu-AMP and then transferred to the acceptor end of tRNA(Glu). The protein is Glutamate--tRNA ligase of Yersinia pestis.